We begin with the raw amino-acid sequence, 608 residues long: Phosphogluconate dehydratase (608 aa).

Cysteine 154 and cysteine 221 together coordinate [4Fe-4S] cluster.

It belongs to the IlvD/Edd family. Requires [4Fe-4S] cluster as cofactor.

It catalyses the reaction 6-phospho-D-gluconate = 2-dehydro-3-deoxy-6-phospho-D-gluconate + H2O. It participates in carbohydrate metabolism; Entner-Doudoroff pathway. Catalyzes the dehydration of 6-phospho-D-gluconate to 2-dehydro-3-deoxy-6-phospho-D-gluconate. In Pseudomonas aeruginosa (strain ATCC 15692 / DSM 22644 / CIP 104116 / JCM 14847 / LMG 12228 / 1C / PRS 101 / PAO1), this protein is Phosphogluconate dehydratase.